The sequence spans 277 residues: Energy-coupling factor transporter ATP-binding protein EcfA1 (277 aa).

The ABC transporter domain occupies 5–240 (LEVENLVFKY…SEDMVEIGLD (236 aa)). Residue 40–47 (GQNGSGKS) coordinates ATP. The active-site Proton acceptor is E166.

Belongs to the ABC transporter superfamily. Energy-coupling factor EcfA family. In terms of assembly, forms a stable energy-coupling factor (ECF) transporter complex composed of 2 membrane-embedded substrate-binding proteins (S component), 2 ATP-binding proteins (A component) and 2 transmembrane proteins (T component). In L.lactis forms a stable complex with EcfA' and EcfT and substrate-binding components. In E.coli forms a stable complex with EcfA', EcfT and individually with 3 tested substrate-binding components (BioY, NiaX and ThiT) with a stoichiometry of 1.1:1:1. The core ECF complex interacts with a number of substrate-specific binding components, including BioY, BioY2, HmpT, NiaX, PanT, QueT, RibU and ThiT.

The protein localises to the cell membrane. In terms of biological role, ATP-binding (A) component of a common energy-coupling factor (ECF) ABC-transporter complex. Unlike classic ABC transporters this ECF transporter provides the energy necessary to transport a number of different substrates. In this organism these probably include biotin, thiamine precursor, niacin, pantothenic acid, queuosine precursor, riboflavin and thiamine. Uptake of niacin or riboflavin into proteosomes containing EcfA1A2T and Niax or RibU has been demonstrated. Uptake requires hydrolyzable Mg-ATP and is substrate-specific; NiaX-containing proteosomes did not transport riboflavin. In Lactococcus lactis subsp. cremoris (strain MG1363), this protein is Energy-coupling factor transporter ATP-binding protein EcfA1.